The chain runs to 164 residues: Endoribonuclease YbeY (164 aa).

Zn(2+)-binding residues include histidine 132, histidine 136, and histidine 142.

It belongs to the endoribonuclease YbeY family. The cofactor is Zn(2+).

It localises to the cytoplasm. In terms of biological role, single strand-specific metallo-endoribonuclease involved in late-stage 70S ribosome quality control and in maturation of the 3' terminus of the 16S rRNA. The polypeptide is Endoribonuclease YbeY (Clostridium kluyveri (strain NBRC 12016)).